A 211-amino-acid polypeptide reads, in one-letter code: ATP-dependent Clp protease proteolytic subunit (211 aa).

The Nucleophile role is filled by Ser-114. Residue His-139 is part of the active site.

This sequence belongs to the peptidase S14 family. In terms of assembly, fourteen ClpP subunits assemble into 2 heptameric rings which stack back to back to give a disk-like structure with a central cavity, resembling the structure of eukaryotic proteasomes.

It is found in the cytoplasm. It catalyses the reaction Hydrolysis of proteins to small peptides in the presence of ATP and magnesium. alpha-casein is the usual test substrate. In the absence of ATP, only oligopeptides shorter than five residues are hydrolyzed (such as succinyl-Leu-Tyr-|-NHMec, and Leu-Tyr-Leu-|-Tyr-Trp, in which cleavage of the -Tyr-|-Leu- and -Tyr-|-Trp bonds also occurs).. Functionally, cleaves peptides in various proteins in a process that requires ATP hydrolysis. Has a chymotrypsin-like activity. Plays a major role in the degradation of misfolded proteins. In Pseudomonas fluorescens (strain ATCC BAA-477 / NRRL B-23932 / Pf-5), this protein is ATP-dependent Clp protease proteolytic subunit.